The chain runs to 156 residues: Small ribosomal subunit protein uS7 (156 aa).

It belongs to the universal ribosomal protein uS7 family. As to quaternary structure, part of the 30S ribosomal subunit. Contacts proteins S9 and S11.

One of the primary rRNA binding proteins, it binds directly to 16S rRNA where it nucleates assembly of the head domain of the 30S subunit. Is located at the subunit interface close to the decoding center, probably blocks exit of the E-site tRNA. The polypeptide is Small ribosomal subunit protein uS7 (Prochlorococcus marinus (strain SARG / CCMP1375 / SS120)).